A 92-amino-acid polypeptide reads, in one-letter code: Putative pterin-4-alpha-carbinolamine dehydratase (92 aa).

This sequence belongs to the pterin-4-alpha-carbinolamine dehydratase family.

It carries out the reaction (4aS,6R)-4a-hydroxy-L-erythro-5,6,7,8-tetrahydrobiopterin = (6R)-L-erythro-6,7-dihydrobiopterin + H2O. The sequence is that of Putative pterin-4-alpha-carbinolamine dehydratase from Natronomonas pharaonis (strain ATCC 35678 / DSM 2160 / CIP 103997 / JCM 8858 / NBRC 14720 / NCIMB 2260 / Gabara) (Halobacterium pharaonis).